The primary structure comprises 117 residues: Cuticle protein CP1246 (117 aa).

4 consecutive repeat copies span residues 1 to 17 (NYGE…LVQF), 26 to 43 (AEIG…HVQF), 67 to 84 (QSYG…NRQF), and 93 to 110 (VLVG…NVQF).

Calcified shell.

The polypeptide is Cuticle protein CP1246 (Cancer pagurus (Rock crab)).